The chain runs to 127 residues: Photosystem II reaction center Psb28 protein (127 aa).

The disordered stretch occupies residues 107–127 (GLGYSQNQNSDQTDGDANAEA). Over residues 109–118 (GYSQNQNSDQ) the composition is skewed to polar residues.

This sequence belongs to the Psb28 family. In terms of assembly, part of the photosystem II complex.

It localises to the cellular thylakoid membrane. The polypeptide is Photosystem II reaction center Psb28 protein (Parasynechococcus marenigrum (strain WH8102)).